A 37-amino-acid polypeptide reads, in one-letter code: Cytochrome b6-f complex subunit 5 (37 aa).

The chain crosses the membrane as a helical span at residues 5–25 (LPSGIVLGLIPITLAGLFVTA).

It belongs to the PetG family. The 4 large subunits of the cytochrome b6-f complex are cytochrome b6, subunit IV (17 kDa polypeptide, PetD), cytochrome f and the Rieske protein, while the 4 small subunits are PetG, PetL, PetM and PetN. The complex functions as a dimer.

It localises to the plastid. Its subcellular location is the chloroplast thylakoid membrane. Functionally, component of the cytochrome b6-f complex, which mediates electron transfer between photosystem II (PSII) and photosystem I (PSI), cyclic electron flow around PSI, and state transitions. PetG is required for either the stability or assembly of the cytochrome b6-f complex. The protein is Cytochrome b6-f complex subunit 5 of Pinus thunbergii (Japanese black pine).